The chain runs to 183 residues: Potassium-transporting ATPase KdpC subunit (183 aa).

Residues 10–30 (ASLLVLSLVTGVAYPLLVTGI) traverse the membrane as a helical segment.

Belongs to the KdpC family. As to quaternary structure, the system is composed of three essential subunits: KdpA, KdpB and KdpC.

It is found in the cell inner membrane. Its function is as follows. Part of the high-affinity ATP-driven potassium transport (or Kdp) system, which catalyzes the hydrolysis of ATP coupled with the electrogenic transport of potassium into the cytoplasm. This subunit acts as a catalytic chaperone that increases the ATP-binding affinity of the ATP-hydrolyzing subunit KdpB by the formation of a transient KdpB/KdpC/ATP ternary complex. This is Potassium-transporting ATPase KdpC subunit from Pseudomonas aeruginosa (strain UCBPP-PA14).